The following is a 358-amino-acid chain: Holliday junction branch migration complex subunit RuvB (358 aa).

The segment at 1–24 (MSIQTDDFAAPPPKRILSGAPASP) is disordered. A large ATPase domain (RuvB-L) region spans residues 5–194 (TDDFAAPPPK…FGIVARLEFY (190 aa)). Residues leucine 33, arginine 34, glycine 75, lysine 78, threonine 79, threonine 80, 141–143 (EDY), arginine 184, tyrosine 194, and arginine 231 contribute to the ATP site. Threonine 79 lines the Mg(2+) pocket. The segment at 195–265 (SPEELASIVR…IAHRALVMLD (71 aa)) is small ATPAse domain (RuvB-S). Positions 268-358 (PQGFDLMDRK…GDMFGAMRPE (91 aa)) are head domain (RuvB-H). Positions 304, 323, and 328 each coordinate DNA.

It belongs to the RuvB family. Homohexamer. Forms an RuvA(8)-RuvB(12)-Holliday junction (HJ) complex. HJ DNA is sandwiched between 2 RuvA tetramers; dsDNA enters through RuvA and exits via RuvB. An RuvB hexamer assembles on each DNA strand where it exits the tetramer. Each RuvB hexamer is contacted by two RuvA subunits (via domain III) on 2 adjacent RuvB subunits; this complex drives branch migration. In the full resolvosome a probable DNA-RuvA(4)-RuvB(12)-RuvC(2) complex forms which resolves the HJ.

It is found in the cytoplasm. The catalysed reaction is ATP + H2O = ADP + phosphate + H(+). The RuvA-RuvB-RuvC complex processes Holliday junction (HJ) DNA during genetic recombination and DNA repair, while the RuvA-RuvB complex plays an important role in the rescue of blocked DNA replication forks via replication fork reversal (RFR). RuvA specifically binds to HJ cruciform DNA, conferring on it an open structure. The RuvB hexamer acts as an ATP-dependent pump, pulling dsDNA into and through the RuvAB complex. RuvB forms 2 homohexamers on either side of HJ DNA bound by 1 or 2 RuvA tetramers; 4 subunits per hexamer contact DNA at a time. Coordinated motions by a converter formed by DNA-disengaged RuvB subunits stimulates ATP hydrolysis and nucleotide exchange. Immobilization of the converter enables RuvB to convert the ATP-contained energy into a lever motion, pulling 2 nucleotides of DNA out of the RuvA tetramer per ATP hydrolyzed, thus driving DNA branch migration. The RuvB motors rotate together with the DNA substrate, which together with the progressing nucleotide cycle form the mechanistic basis for DNA recombination by continuous HJ branch migration. Branch migration allows RuvC to scan DNA until it finds its consensus sequence, where it cleaves and resolves cruciform DNA. The chain is Holliday junction branch migration complex subunit RuvB from Albidiferax ferrireducens (strain ATCC BAA-621 / DSM 15236 / T118) (Rhodoferax ferrireducens).